We begin with the raw amino-acid sequence, 192 residues long: MKLLEERIRKDGEVLDGDVLKINSFLNHQVDPELMMQVGEEFKRLFENEKITKVLTCEASGIAPGIMAAYQLGVPMVFARKKKPSTLNDAVYWADVFSYTKKVNNKICVEKKFLSSDDHLLIIDDFLAHGEAVKGMLNIAKQANAAVAGVGVVVAKEFQGGSDWVKEHGYRLEALARISNFENNQVHFVGEK.

Residues Leu-20 and Asn-27 each contribute to the xanthine site. 128–132 (AHGEA) provides a ligand contact to 5-phospho-alpha-D-ribose 1-diphosphate. Lys-156 serves as a coordination point for xanthine.

The protein belongs to the purine/pyrimidine phosphoribosyltransferase family. Xpt subfamily. In terms of assembly, homodimer.

The protein resides in the cytoplasm. The enzyme catalyses XMP + diphosphate = xanthine + 5-phospho-alpha-D-ribose 1-diphosphate. It functions in the pathway purine metabolism; XMP biosynthesis via salvage pathway; XMP from xanthine: step 1/1. Functionally, converts the preformed base xanthine, a product of nucleic acid breakdown, to xanthosine 5'-monophosphate (XMP), so it can be reused for RNA or DNA synthesis. This chain is Xanthine phosphoribosyltransferase, found in Lactobacillus gasseri (strain ATCC 33323 / DSM 20243 / BCRC 14619 / CIP 102991 / JCM 1131 / KCTC 3163 / NCIMB 11718 / NCTC 13722 / AM63).